The chain runs to 771 residues: Solute carrier family 7 member 14 (771 aa).

6 consecutive transmembrane segments (helical) span residues 58-78 (LISL…SGLV), 83-103 (AGPG…LSGV), 130-150 (FVAF…TAAG), 187-207 (YPDL…ALGV), 216-236 (VLNV…FFFI), and 251-271 (WSGV…FDII). N-linked (GlcNAc...) asparagine glycosylation occurs at asparagine 282. Transmembrane regions (helical) follow at residues 291-311 (ASLV…TLMV), 336-356 (FVVA…SLFP), 360-380 (VIYA…VSSY), 384-404 (PVVA…LVSL), and 407-427 (LIEM…VCVL). A phosphoserine mark is found at serine 465, serine 468, and serine 488. 4 helical membrane-spanning segments follow: residues 565–585 (VTIC…FIIF), 596–616 (WAIL…FVIL), 628–648 (MAPC…YLML), and 655–675 (WIRF…YGIW). A glycan (N-linked (GlcNAc...) asparagine) is linked at asparagine 676. Positions 712 to 771 (TEGESQENWGGPAEDKGFYYQQMSDTQPNTRTSSKAKSKSKHKQNSEALIANDELDYSPE) are disordered. The span at 732–743 (QQMSDTQPNTRT) shows a compositional bias: polar residues. Over residues 745 to 754 (SKAKSKSKHK) the composition is skewed to basic residues. Serine 757 and serine 769 each carry phosphoserine.

The protein belongs to the amino acid-polyamine-organocation (APC) superfamily. Cationic amino acid transporter (CAT) (TC 2.A.3.3) family.

It localises to the lysosome membrane. The enzyme catalyses 4-aminobutanoate(in) = 4-aminobutanoate(out). In terms of biological role, imports 4-aminobutanoate (GABA) into lysosomes. May act as a GABA sensor that regulates mTORC2-dependent INS signaling and gluconeogenesis. The transport mechanism and substrate selectivity remain to be elucidated. This Bos taurus (Bovine) protein is Solute carrier family 7 member 14.